The primary structure comprises 250 residues: MSNDPTHQFLVNKIVPIEIGGIDFSFTNASLFMVATVGVAAGFLYLTTSQRGVIPTRMQSVSEVSYEFIASMLREGAGSHGMKFFPMVFSLFMFILTANLLGMFPYFFTVTSQIIVTFALAVFVIGTVILYGFYKHGFGFLKLFVPHGVPGALLPLVVSIEVISFLSRPISLSVRLFANMLAGHITLKVFAGFVASLSAFGALGIGGAILPLIMTVALTGLEFLVAFLQAYVFAVLTCMYLNDAVHPGSH.

Transmembrane regions (helical) follow at residues 26–46 (FTNASLFMVATVGVAAGFLYL), 84–104 (FFPMVFSLFMFILTANLLGMF), 114–134 (IIVTFALAVFVIGTVILYGFY), 143–163 (LFVPHGVPGALLPLVVSIEVI), 193–213 (FVASLSAFGALGIGGAILPLI), and 216–236 (VALTGLEFLVAFLQAYVFAVL).

Belongs to the ATPase A chain family. In terms of assembly, F-type ATPases have 2 components, CF(1) - the catalytic core - and CF(0) - the membrane proton channel. CF(1) has five subunits: alpha(3), beta(3), gamma(1), delta(1), epsilon(1). CF(0) has three main subunits: a(1), b(2) and c(9-12). The alpha and beta chains form an alternating ring which encloses part of the gamma chain. CF(1) is attached to CF(0) by a central stalk formed by the gamma and epsilon chains, while a peripheral stalk is formed by the delta and b chains.

Its subcellular location is the cell inner membrane. Key component of the proton channel; it plays a direct role in the translocation of protons across the membrane. The sequence is that of ATP synthase subunit a from Sinorhizobium fredii (strain NBRC 101917 / NGR234).